The chain runs to 309 residues: Homoserine kinase (309 aa).

Residue 91–101 (PIGSGLGSSAC) coordinates ATP.

Belongs to the GHMP kinase family. Homoserine kinase subfamily.

The protein localises to the cytoplasm. It carries out the reaction L-homoserine + ATP = O-phospho-L-homoserine + ADP + H(+). It functions in the pathway amino-acid biosynthesis; L-threonine biosynthesis; L-threonine from L-aspartate: step 4/5. Functionally, catalyzes the ATP-dependent phosphorylation of L-homoserine to L-homoserine phosphate. The protein is Homoserine kinase of Yersinia pseudotuberculosis serotype O:1b (strain IP 31758).